Here is a 115-residue protein sequence, read N- to C-terminus: Synaptobrevin homolog 2 (115 aa).

Residues 1 to 16 (MSSSVPYDPYVPPEES) show a composition bias toward low complexity. Residues 1 to 28 (MSSSVPYDPYVPPEESNSGANPNSQNKT) are disordered. At 1 to 93 (MSSSVPYDPY…MWWKDLKMRM (93 aa)) the chain is on the cytoplasmic side. Positions 17–28 (NSGANPNSQNKT) are enriched in polar residues. Residues 27–87 (KTAALRQEID…NRVRKQMWWK (61 aa)) enclose the v-SNARE coiled-coil homology domain. Position 58 is a phosphoserine (S58). A Glycyl lysine isopeptide (Lys-Gly) (interchain with G-Cter in ubiquitin) cross-link involves residue K62. C94 is lipidated: S-palmitoyl cysteine. Residues 94–112 (CLFLVVIILLVVIIVPIVV) form a helical; Anchor for type IV membrane protein membrane-spanning segment. Residues 113–115 (HFS) are Vesicular-facing.

This sequence belongs to the synaptobrevin family. Palmitoylated by SWF1.

Its subcellular location is the endomembrane system. Its function is as follows. SNC1 and SNC2 are vesicle-targeting proteins essential for normal secretory traffic between the Golgi and the plasma membrane. They may also be involved in vesicle fusion. The protein is Synaptobrevin homolog 2 (SNC2) of Saccharomyces cerevisiae (strain ATCC 204508 / S288c) (Baker's yeast).